Consider the following 233-residue polypeptide: NAD-dependent protein deacylase (233 aa).

Residues 1–230 (MKNIMILSGA…ALDIENFMKD (230 aa)) enclose the Deacetylase sirtuin-type domain. 9-28 (GAGLSAPSGLKTFRDNDGLW) provides a ligand contact to NAD(+). Residues Tyr-53 and Arg-56 each contribute to the substrate site. Residue 88–91 (QNVD) participates in NAD(+) binding. Residue His-106 is the Proton acceptor of the active site. Cys-114, Cys-117, Cys-133, and Cys-136 together coordinate Zn(2+). NAD(+)-binding positions include 172–174 (GTS) and Ile-213.

It belongs to the sirtuin family. Class III subfamily. The cofactor is Zn(2+).

The protein resides in the cytoplasm. It carries out the reaction N(6)-acetyl-L-lysyl-[protein] + NAD(+) + H2O = 2''-O-acetyl-ADP-D-ribose + nicotinamide + L-lysyl-[protein]. The enzyme catalyses N(6)-succinyl-L-lysyl-[protein] + NAD(+) + H2O = 2''-O-succinyl-ADP-D-ribose + nicotinamide + L-lysyl-[protein]. Functionally, NAD-dependent lysine deacetylase and desuccinylase that specifically removes acetyl and succinyl groups on target proteins. Modulates the activities of several proteins which are inactive in their acylated form. The chain is NAD-dependent protein deacylase from Campylobacter jejuni (strain RM1221).